We begin with the raw amino-acid sequence, 482 residues long: Cobyrinate a,c-diamide synthase (482 aa).

A GATase cobBQ-type domain is found at 248-441; sequence RLAIAQDQAF…LHLHWGSQIS (194 aa). Catalysis depends on Cys331, which acts as the Nucleophile.

Belongs to the CobB/CbiA family. Mg(2+) serves as cofactor.

It carries out the reaction cob(II)yrinate + 2 L-glutamine + 2 ATP + 2 H2O = cob(II)yrinate a,c diamide + 2 L-glutamate + 2 ADP + 2 phosphate + 2 H(+). The protein operates within cofactor biosynthesis; adenosylcobalamin biosynthesis; cob(II)yrinate a,c-diamide from sirohydrochlorin (anaerobic route): step 10/10. In terms of biological role, catalyzes the ATP-dependent amidation of the two carboxylate groups at positions a and c of cobyrinate, using either L-glutamine or ammonia as the nitrogen source. The sequence is that of Cobyrinate a,c-diamide synthase from Synechocystis sp. (strain ATCC 27184 / PCC 6803 / Kazusa).